The following is a 920-amino-acid chain: Periplasmic nitrate reductase (920 aa).

A signal peptide (tat-type signal) is located at residues 1-29 (MNRRDFIKSTAAAAACASAGIALPANLNA). Positions 35–91 (WRWDKAVCRFCGTGCGIMVATKNGKIVAVKGDPEAPVNRGLNCIKGYFNAKIMYGDD) constitute a 4Fe-4S Mo/W bis-MGD-type domain. [4Fe-4S] cluster is bound by residues Cys-42, Cys-45, Cys-49, and Cys-77. Residues Lys-79, Gln-147, Asn-172, Cys-176, 209–216 (WGANMAEM), Met-416, Gln-420, Asn-526, 551–552 (SD), Lys-574, Asp-601, and 810–819 (TGRVLEHWHS) each bind Mo-bis(molybdopterin guanine dinucleotide). Trp-886 is a substrate binding site. The Mo-bis(molybdopterin guanine dinucleotide) site is built by Asn-894 and Lys-911.

This sequence belongs to the prokaryotic molybdopterin-containing oxidoreductase family. NasA/NapA/NarB subfamily. In terms of assembly, component of the periplasmic nitrate reductase NapAB complex composed of NapA and NapB. The cofactor is [4Fe-4S] cluster. Mo-bis(molybdopterin guanine dinucleotide) serves as cofactor. Post-translationally, predicted to be exported by the Tat system. The position of the signal peptide cleavage has not been experimentally proven.

It localises to the periplasm. The enzyme catalyses 2 Fe(II)-[cytochrome] + nitrate + 2 H(+) = 2 Fe(III)-[cytochrome] + nitrite + H2O. Its function is as follows. Catalytic subunit of the periplasmic nitrate reductase complex NapAB. Receives electrons from NapB and catalyzes the reduction of nitrate to nitrite. This chain is Periplasmic nitrate reductase, found in Campylobacter hominis (strain ATCC BAA-381 / DSM 21671 / CCUG 45161 / LMG 19568 / NCTC 13146 / CH001A).